A 248-amino-acid polypeptide reads, in one-letter code: Probable transcriptional regulatory protein BARBAKC583_0163 (248 aa).

This sequence belongs to the TACO1 family.

Its subcellular location is the cytoplasm. The polypeptide is Probable transcriptional regulatory protein BARBAKC583_0163 (Bartonella bacilliformis (strain ATCC 35685 / KC583 / Herrer 020/F12,63)).